Reading from the N-terminus, the 104-residue chain is uncharacterized protein (104 aa).

Residues 72-92 (LIFSHNIVIIVSPIYMISFII) traverse the membrane as a helical segment.

It is found in the membrane. This is an uncharacterized protein from Saccharomyces cerevisiae (strain ATCC 204508 / S288c) (Baker's yeast).